The primary structure comprises 435 residues: Putative BTB/POZ domain-containing protein L275 (435 aa).

The 70-residue stretch at 80 to 149 (YDGYVYINVG…IKGKQNDNHN (70 aa)) folds into the BTB domain.

The protein belongs to the mimivirus BTB/WD family.

In Acanthamoeba polyphaga mimivirus (APMV), this protein is Putative BTB/POZ domain-containing protein L275.